A 431-amino-acid polypeptide reads, in one-letter code: Histidinol dehydrogenase (431 aa).

Residues Tyr127, Gln189, and Asn212 each coordinate NAD(+). Residues Ser237, Gln259, and His262 each coordinate substrate. The Zn(2+) site is built by Gln259 and His262. Active-site proton acceptor residues include Glu326 and His327. Residues His327, Asp360, Glu414, and His419 each coordinate substrate. Zn(2+) is bound at residue Asp360. Zn(2+) is bound at residue His419.

The protein belongs to the histidinol dehydrogenase family. It depends on Zn(2+) as a cofactor.

It carries out the reaction L-histidinol + 2 NAD(+) + H2O = L-histidine + 2 NADH + 3 H(+). It participates in amino-acid biosynthesis; L-histidine biosynthesis; L-histidine from 5-phospho-alpha-D-ribose 1-diphosphate: step 9/9. Its function is as follows. Catalyzes the sequential NAD-dependent oxidations of L-histidinol to L-histidinaldehyde and then to L-histidine. The sequence is that of Histidinol dehydrogenase from Xanthomonas oryzae pv. oryzae (strain KACC10331 / KXO85).